We begin with the raw amino-acid sequence, 144 residues long: Large ribosomal subunit protein uL15 (144 aa).

Positions 1–57 (MLLNTLSPAAGSKHAPKRLGRGVGSGLGKTGGRGHKGQKSRSGGKVRPGFEGGQMPL) are disordered. Residues 21–31 (RGVGSGLGKTG) show a composition bias toward gly residues. Positions 32-44 (GRGHKGQKSRSGG) are enriched in basic residues.

This sequence belongs to the universal ribosomal protein uL15 family. Part of the 50S ribosomal subunit.

In terms of biological role, binds to the 23S rRNA. This is Large ribosomal subunit protein uL15 from Vibrio cholerae serotype O1 (strain ATCC 39541 / Classical Ogawa 395 / O395).